Here is a 424-residue protein sequence, read N- to C-terminus: Gamma-glutamyl phosphate reductase (424 aa).

Belongs to the gamma-glutamyl phosphate reductase family.

The protein resides in the cytoplasm. It carries out the reaction L-glutamate 5-semialdehyde + phosphate + NADP(+) = L-glutamyl 5-phosphate + NADPH + H(+). The protein operates within amino-acid biosynthesis; L-proline biosynthesis; L-glutamate 5-semialdehyde from L-glutamate: step 2/2. Catalyzes the NADPH-dependent reduction of L-glutamate 5-phosphate into L-glutamate 5-semialdehyde and phosphate. The product spontaneously undergoes cyclization to form 1-pyrroline-5-carboxylate. The protein is Gamma-glutamyl phosphate reductase of Dehalococcoides mccartyi (strain ATCC BAA-2266 / KCTC 15142 / 195) (Dehalococcoides ethenogenes (strain 195)).